Here is a 453-residue protein sequence, read N- to C-terminus: 4,4'-diapolycopene-4,4'-dial dehydrogenase (453 aa).

Over residues 1–20 (MPDNDSHSLKSLPERQREDL) the composition is skewed to basic and acidic residues. A disordered region spans residues 1-23 (MPDNDSHSLKSLPERQREDLFSA). Active-site residues include glutamate 215 and cysteine 249.

It belongs to the aldehyde dehydrogenase family.

The enzyme catalyses all-trans-4,4'-diapolycopene-4,4'-dial + 2 A + 2 H2O = all-trans-4,4'-diapolycopene-4,4'-dioate + 2 AH2 + 2 H(+). The protein operates within carotenoid biosynthesis. Functionally, involved in the biosynthesis of the major C30 carotenoid 4,4'-diapolycopene-4,4'-dioic acid, which protects B.firmus from peroxidative reactions. Catalyzes the oxidation of 4,4'-diapolycopene-4,4'-dial to yield 4,4'-diapolycopene-4,4'-dioic aci. The chain is 4,4'-diapolycopene-4,4'-dial dehydrogenase from Cytobacillus firmus (Bacillus firmus).